We begin with the raw amino-acid sequence, 274 residues long: Large ribosomal subunit protein uL2cz/uL2cy (274 aa).

Disordered regions lie at residues 1-21 and 224-274; these read MAIH…VDSQ and NPVD…RRSK.

The protein belongs to the universal ribosomal protein uL2 family. As to quaternary structure, part of the 50S ribosomal subunit.

Its subcellular location is the plastid. The protein resides in the chloroplast. The protein is Large ribosomal subunit protein uL2cz/uL2cy (rpl2-A) of Populus trichocarpa (Western balsam poplar).